A 367-amino-acid chain; its full sequence is D-alanine--D-alanine ligase (367 aa).

The ATP-grasp domain maps to 145–351 (KRLLRDAGLP…QPALMDALIA (207 aa)). An ATP-binding site is contributed by 174 to 229 (HAVGCSELFIKPANLGSSVGISKARTPQEFAAACDLALRFDGKILIERCISPVREI). The Mg(2+) site is built by aspartate 306, glutamate 318, and asparagine 320.

It belongs to the D-alanine--D-alanine ligase family. Requires Mg(2+) as cofactor. Mn(2+) serves as cofactor.

The protein resides in the cytoplasm. The enzyme catalyses 2 D-alanine + ATP = D-alanyl-D-alanine + ADP + phosphate + H(+). It participates in cell wall biogenesis; peptidoglycan biosynthesis. Its function is as follows. Cell wall formation. The polypeptide is D-alanine--D-alanine ligase (Bradyrhizobium sp. (strain BTAi1 / ATCC BAA-1182)).